A 231-amino-acid polypeptide reads, in one-letter code: ATP phosphoribosyltransferase (231 aa).

Belongs to the ATP phosphoribosyltransferase family. Short subfamily. As to quaternary structure, heteromultimer composed of HisG and HisZ subunits.

The protein localises to the cytoplasm. The enzyme catalyses 1-(5-phospho-beta-D-ribosyl)-ATP + diphosphate = 5-phospho-alpha-D-ribose 1-diphosphate + ATP. The protein operates within amino-acid biosynthesis; L-histidine biosynthesis; L-histidine from 5-phospho-alpha-D-ribose 1-diphosphate: step 1/9. Functionally, catalyzes the condensation of ATP and 5-phosphoribose 1-diphosphate to form N'-(5'-phosphoribosyl)-ATP (PR-ATP). Has a crucial role in the pathway because the rate of histidine biosynthesis seems to be controlled primarily by regulation of HisG enzymatic activity. The protein is ATP phosphoribosyltransferase (hisG) of Sinorhizobium fredii (strain NBRC 101917 / NGR234).